The sequence spans 210 residues: Ion-translocating oxidoreductase complex subunit G (210 aa).

A helical transmembrane segment spans residues 9–29; it reads GVTLAVFAAITTGLTAVINAV. Residue Thr-175 is modified to FMN phosphoryl threonine.

This sequence belongs to the RnfG family. The complex is composed of six subunits: RnfA, RnfB, RnfC, RnfD, RnfE and RnfG. FMN is required as a cofactor.

The protein localises to the cell inner membrane. Functionally, part of a membrane-bound complex that couples electron transfer with translocation of ions across the membrane. This Erwinia tasmaniensis (strain DSM 17950 / CFBP 7177 / CIP 109463 / NCPPB 4357 / Et1/99) protein is Ion-translocating oxidoreductase complex subunit G.